A 344-amino-acid polypeptide reads, in one-letter code: Hydrophobic dipeptide epimerase (344 aa).

Residues T126 and 151-153 (KIK) contribute to the substrate site. The Mg(2+) site is built by D184, E210, and D235. Substrate is bound by residues K257 and 307–309 (DLD).

The protein belongs to the mandelate racemase/muconate lactonizing enzyme family. The cofactor is Mg(2+).

Its function is as follows. Dipeptide epimerase with a preference for hydrophobic substrates. Catalyzes the epimerization of L-Ala-L-Thr, L-Ala-L-Met, L-Ala-L-His, L-Ala-L-Phe, L-Ala-L-Tyr, L-Ala-L-Trp, L-Ile-L-Ala, L-Ile-L-Ser, L-Ile-L-Met, L-Ile-L-His, L-Ile-L-Phe, L-Ile-L-Tyr, L-Ile-L-Trp, L-Phe-L-Met, L-Phe-L-His, L-Phe-L-Phe, L-Phe-L-Tyr, L-Phe-L-Trp, L-Phe-L-Ser, L-Phe-L-Thr and L-Phe-L-Lys (in vitro). This chain is Hydrophobic dipeptide epimerase, found in Roseobacter litoralis (strain ATCC 49566 / DSM 6996 / JCM 21268 / NBRC 15278 / OCh 149).